A 574-amino-acid polypeptide reads, in one-letter code: UvrABC system protein C (574 aa).

A GIY-YIG domain is found at 12-92; the sequence is KKPGVYIFKN…IYIHKPKYNI (81 aa). Residues 200–235 form the UVR domain; sequence EEVKNYLQKAMMDYAKIKNYEKAAQMRDTLFKLENL.

It belongs to the UvrC family. Interacts with UvrB in an incision complex.

The protein localises to the cytoplasm. Functionally, the UvrABC repair system catalyzes the recognition and processing of DNA lesions. UvrC both incises the 5' and 3' sides of the lesion. The N-terminal half is responsible for the 3' incision and the C-terminal half is responsible for the 5' incision. This is UvrABC system protein C from Petrotoga mobilis (strain DSM 10674 / SJ95).